The chain runs to 143 residues: Putative pre-16S rRNA nuclease (143 aa).

This sequence belongs to the YqgF nuclease family.

Its subcellular location is the cytoplasm. Functionally, could be a nuclease involved in processing of the 5'-end of pre-16S rRNA. This Crocosphaera subtropica (strain ATCC 51142 / BH68) (Cyanothece sp. (strain ATCC 51142)) protein is Putative pre-16S rRNA nuclease.